The sequence spans 330 residues: Tryptophan--tRNA ligase (330 aa).

ATP contacts are provided by residues 9–11 (QPT) and 17–18 (GN). Residues 10–18 (PTGDPHIGN) carry the 'HIGH' region motif. Asp136 contacts L-tryptophan. Residues 148–150 (GED), Ile187, and 195–199 (KMSKS) contribute to the ATP site. The short motif at 195-199 (KMSKS) is the 'KMSKS' region element.

Belongs to the class-I aminoacyl-tRNA synthetase family. In terms of assembly, homodimer.

The protein resides in the cytoplasm. The enzyme catalyses tRNA(Trp) + L-tryptophan + ATP = L-tryptophyl-tRNA(Trp) + AMP + diphosphate + H(+). Its function is as follows. Catalyzes the attachment of tryptophan to tRNA(Trp). This is Tryptophan--tRNA ligase from Deinococcus radiodurans (strain ATCC 13939 / DSM 20539 / JCM 16871 / CCUG 27074 / LMG 4051 / NBRC 15346 / NCIMB 9279 / VKM B-1422 / R1).